The chain runs to 288 residues: ATP phosphoribosyltransferase (288 aa).

This sequence belongs to the ATP phosphoribosyltransferase family. Long subfamily. It depends on Mg(2+) as a cofactor.

The protein resides in the cytoplasm. It carries out the reaction 1-(5-phospho-beta-D-ribosyl)-ATP + diphosphate = 5-phospho-alpha-D-ribose 1-diphosphate + ATP. It functions in the pathway amino-acid biosynthesis; L-histidine biosynthesis; L-histidine from 5-phospho-alpha-D-ribose 1-diphosphate: step 1/9. Its activity is regulated as follows. Feedback inhibited by histidine. Catalyzes the condensation of ATP and 5-phosphoribose 1-diphosphate to form N'-(5'-phosphoribosyl)-ATP (PR-ATP). Has a crucial role in the pathway because the rate of histidine biosynthesis seems to be controlled primarily by regulation of HisG enzymatic activity. In Methanococcus maripaludis (strain DSM 14266 / JCM 13030 / NBRC 101832 / S2 / LL), this protein is ATP phosphoribosyltransferase.